Consider the following 178-residue polypeptide: Inorganic pyrophosphatase (178 aa).

Residues K29, R43, and Y55 each contribute to the substrate site. 3 residues coordinate Mg(2+): D65, D70, and D102. A substrate-binding site is contributed by Y141.

This sequence belongs to the PPase family. Homohexamer. Requires Mg(2+) as cofactor.

The protein localises to the cytoplasm. It carries out the reaction diphosphate + H2O = 2 phosphate + H(+). Its function is as follows. Catalyzes the hydrolysis of inorganic pyrophosphate (PPi) forming two phosphate ions. The protein is Inorganic pyrophosphatase of Rickettsia typhi (strain ATCC VR-144 / Wilmington).